A 426-amino-acid chain; its full sequence is CinA-like protein (426 aa).

Belongs to the CinA family.

The sequence is that of CinA-like protein from Gloeobacter violaceus (strain ATCC 29082 / PCC 7421).